We begin with the raw amino-acid sequence, 443 residues long: Mitochondrial distribution and morphology protein 10 (443 aa).

This sequence belongs to the MDM10 family. In terms of assembly, component of the ER-mitochondria encounter structure (ERMES) or MDM complex, composed of MMM1, MDM10, MDM12 and MDM34. Associates with the mitochondrial outer membrane sorting assembly machinery SAM(core) complex.

The protein localises to the mitochondrion outer membrane. In terms of biological role, component of the ERMES/MDM complex, which serves as a molecular tether to connect the endoplasmic reticulum and mitochondria. Components of this complex are involved in the control of mitochondrial shape and protein biogenesis and may function in phospholipid exchange. MDM10 is involved in the late assembly steps of the general translocase of the mitochondrial outer membrane (TOM complex). Functions in the TOM40-specific route of the assembly of outer membrane beta-barrel proteins, including the association of TOM40 with the receptor TOM22 and small TOM proteins. Can associate with the SAM(core) complex as well as the MDM12-MMM1 complex, both involved in late steps of the major beta-barrel assembly pathway, that is responsible for biogenesis of all outer membrane beta-barrel proteins. May act as a switch that shuttles between both complexes and channels precursor proteins into the TOM40-specific pathway. Plays a role in mitochondrial morphology and in the inheritance of mitochondria. This chain is Mitochondrial distribution and morphology protein 10, found in Pyricularia oryzae (strain 70-15 / ATCC MYA-4617 / FGSC 8958) (Rice blast fungus).